A 251-amino-acid chain; its full sequence is Mycofactocin precursor peptide peptidase (251 aa).

E38, H40, D49, H128, and E167 together coordinate a divalent metal cation.

This sequence belongs to the creatininase superfamily. As to quaternary structure, homooctamer. Fe(2+) is required as a cofactor. Requires Zn(2+) as cofactor.

The enzyme catalyses [mycofactocin precursor peptide]-C-terminal glycyl-N-{5-[(4-hydroxyphenyl)methyl]-4,4-dimethyl-2-oxopyrrolidin-3-yl}acetamide + H2O = [mycofactocin precursor peptide]-C-terminal glycine + 3-amino-5-[(4-hydroxyphenyl)methyl]-4,4-dimethyl-2-pyrrolidin-2-one. In terms of biological role, peptidase involved in the biosynthesis of the enzyme cofactor mycofactocin (MFT). Catalyzes cleavage of the MftC-modified MftA peptide to liberate its final two residues, which consist of a cross-linked valine-decarboxylated tyrosine dipeptide (named 3-amino-5-[(4-hydroxyphenyl)methyl]-4,4-dimethyl-2-pyrrolidin-2-one or ADHP). This is Mycofactocin precursor peptide peptidase (mftE) from Mycobacterium tuberculosis (strain CDC 1551 / Oshkosh).